A 207-amino-acid chain; its full sequence is Casparian strip membrane protein 1 (207 aa).

A compositionally biased stretch (polar residues) spans 1–12 (MEGESTAVNITE). Positions 1–24 (MEGESTAVNITETPKERKGKAPLL) are disordered. Over 1 to 48 (MEGESTAVNITETPKERKGKAPLLAPPPASGGIKTIVQKAPKGGYKRG) the chain is Cytoplasmic. A helical membrane pass occupies residues 49–69 (LAVFDVVLRIAGIAAALGAVI). Residues 70–98 (AMGSTDQTLPFFTQFFQFKAEFDDLPVFT) lie on the Extracellular side of the membrane. The chain crosses the membrane as a helical span at residues 99–119 (FFVIANAITAAYLALSIPISI). Topologically, residues 120 to 138 (VCIIRPHLVGPRVLLTFLD) are cytoplasmic. A helical membrane pass occupies residues 139-159 (TVMVGLTTAAAGGAASIVYLA). Over 160–184 (HNGNSDANWPAICQQFNDFCQEVSG) the chain is Extracellular. A helical membrane pass occupies residues 185–205 (AVVASFITVVVLMFLIVLSAF). The Cytoplasmic segment spans residues 206–207 (SL).

This sequence belongs to the Casparian strip membrane proteins (CASP) family. In terms of assembly, homodimer and heterodimers.

Its subcellular location is the cell membrane. Its function is as follows. Regulates membrane-cell wall junctions and localized cell wall deposition. Required for establishment of the Casparian strip membrane domain (CSD) and the subsequent formation of Casparian strips, a cell wall modification of the root endodermis that determines an apoplastic barrier between the intraorganismal apoplasm and the extraorganismal apoplasm and prevents lateral diffusion. This chain is Casparian strip membrane protein 1, found in Taraxacum kok-saghyz (Russian dandelion).